Reading from the N-terminus, the 453-residue chain is Ribulose bisphosphate carboxylase large chain (453 aa).

Positions 1–2 (MS) are excised as a propeptide. Pro-3 carries the post-translational modification N-acetylproline. Lys-14 bears the N6,N6,N6-trimethyllysine mark. Substrate-binding residues include Asn-123 and Thr-173. Residue Lys-175 is the Proton acceptor of the active site. Lys-177 is a binding site for substrate. Residues Lys-201, Asp-203, and Glu-204 each coordinate Mg(2+). The residue at position 201 (Lys-201) is an N6-carboxylysine. His-294 serves as the catalytic Proton acceptor. Positions 295, 327, and 379 each coordinate substrate.

The protein belongs to the RuBisCO large chain family. Type I subfamily. As to quaternary structure, heterohexadecamer of 8 large chains and 8 small chains; disulfide-linked. The disulfide link is formed within the large subunit homodimers. Mg(2+) serves as cofactor. In terms of processing, the disulfide bond which can form in the large chain dimeric partners within the hexadecamer appears to be associated with oxidative stress and protein turnover.

It is found in the plastid. The protein resides in the chloroplast. The catalysed reaction is 2 (2R)-3-phosphoglycerate + 2 H(+) = D-ribulose 1,5-bisphosphate + CO2 + H2O. It carries out the reaction D-ribulose 1,5-bisphosphate + O2 = 2-phosphoglycolate + (2R)-3-phosphoglycerate + 2 H(+). RuBisCO catalyzes two reactions: the carboxylation of D-ribulose 1,5-bisphosphate, the primary event in carbon dioxide fixation, as well as the oxidative fragmentation of the pentose substrate in the photorespiration process. Both reactions occur simultaneously and in competition at the same active site. The protein is Ribulose bisphosphate carboxylase large chain of Galium aparine (Catchweed bedstraw).